Here is a 467-residue protein sequence, read N- to C-terminus: Coiled-coil domain-containing protein 174 (467 aa).

Disordered stretches follow at residues 47 to 76 (INKK…LEEQ) and 129 to 163 (GATR…SEEW). The span at 64–76 (RAEKDAEQKLEEQ) shows a compositional bias: basic and acidic residues. A coiled-coil region spans residues 64-99 (RAEKDAEQKLEEQKTLDKAREKLEEKAKLYEKMTKG). Acidic residues predominate over residues 136–147 (IEEERDDDDKEE). A Phosphoserine modification is found at serine 198. The stretch at 268 to 310 (LEMLREQTTDQRIKRENIKEKRKAMLEARLAKLRQKKMKKSKE) forms a coiled coil. 2 disordered regions span residues 301–365 (RQKK…IREW) and 379–454 (KQSE…VTFQ). Basic and acidic residues-rich tracts occupy residues 349-365 (IQER…IREW) and 379-390 (KQSELRAERDPE). Polar residues predominate over residues 406-415 (PMSSQPQSRP). The span at 423–446 (GHSSGQSQEPSSSHTSTPASESSP) shows a compositional bias: low complexity.

It localises to the nucleus. In terms of biological role, probably involved in neuronal development. In Mus musculus (Mouse), this protein is Coiled-coil domain-containing protein 174 (Ccdc174).